The primary structure comprises 1076 residues: DNA-directed RNA polymerase subunit beta (1076 aa).

Belongs to the RNA polymerase beta chain family. As to quaternary structure, in plastids the minimal PEP RNA polymerase catalytic core is composed of four subunits: alpha, beta, beta', and beta''. When a (nuclear-encoded) sigma factor is associated with the core the holoenzyme is formed, which can initiate transcription.

The protein localises to the plastid. The protein resides in the chloroplast. The enzyme catalyses RNA(n) + a ribonucleoside 5'-triphosphate = RNA(n+1) + diphosphate. Its function is as follows. DNA-dependent RNA polymerase catalyzes the transcription of DNA into RNA using the four ribonucleoside triphosphates as substrates. This chain is DNA-directed RNA polymerase subunit beta, found in Agrostis stolonifera (Creeping bentgrass).